The primary structure comprises 1072 residues: Carbamoyl phosphate synthase large chain (1072 aa).

The tract at residues Met-1–Glu-401 is carboxyphosphate synthetic domain. ATP is bound by residues Arg-129, Arg-169, Gly-175, Gly-176, Lys-208, Ile-210, Glu-215, Gly-241, Val-242, His-243, Gln-284, and Glu-298. Residues Arg-133–Val-327 enclose the ATP-grasp 1 domain. The Mg(2+) site is built by Gln-284, Glu-298, and Asn-300. 3 residues coordinate Mn(2+): Gln-284, Glu-298, and Asn-300. The interval Leu-402–Ser-546 is oligomerization domain. A carbamoyl phosphate synthetic domain region spans residues Ile-547 to Gly-929. The ATP-grasp 2 domain occupies Glu-671–Leu-861. Residues Arg-707, Arg-746, Glu-752, Gly-777, Val-778, His-779, Ser-780, Gln-820, and Glu-832 each coordinate ATP. Mg(2+) is bound by residues Gln-820, Glu-832, and Asn-834. Residues Gln-820, Glu-832, and Asn-834 each contribute to the Mn(2+) site. One can recognise an MGS-like domain in the interval Ile-930–Ala-1072. The allosteric domain stretch occupies residues Ile-930–Ala-1072.

It belongs to the CarB family. Composed of two chains; the small (or glutamine) chain promotes the hydrolysis of glutamine to ammonia, which is used by the large (or ammonia) chain to synthesize carbamoyl phosphate. Tetramer of heterodimers (alpha,beta)4. Requires Mg(2+) as cofactor. Mn(2+) serves as cofactor.

It catalyses the reaction hydrogencarbonate + L-glutamine + 2 ATP + H2O = carbamoyl phosphate + L-glutamate + 2 ADP + phosphate + 2 H(+). The enzyme catalyses hydrogencarbonate + NH4(+) + 2 ATP = carbamoyl phosphate + 2 ADP + phosphate + 2 H(+). The protein operates within amino-acid biosynthesis; L-arginine biosynthesis; carbamoyl phosphate from bicarbonate: step 1/1. It functions in the pathway pyrimidine metabolism; UMP biosynthesis via de novo pathway; (S)-dihydroorotate from bicarbonate: step 1/3. Large subunit of the glutamine-dependent carbamoyl phosphate synthetase (CPSase). CPSase catalyzes the formation of carbamoyl phosphate from the ammonia moiety of glutamine, carbonate, and phosphate donated by ATP, constituting the first step of 2 biosynthetic pathways, one leading to arginine and/or urea and the other to pyrimidine nucleotides. The large subunit (synthetase) binds the substrates ammonia (free or transferred from glutamine from the small subunit), hydrogencarbonate and ATP and carries out an ATP-coupled ligase reaction, activating hydrogencarbonate by forming carboxy phosphate which reacts with ammonia to form carbamoyl phosphate. The polypeptide is Carbamoyl phosphate synthase large chain (Bacillus thuringiensis (strain Al Hakam)).